The primary structure comprises 555 residues: Glucose-6-phosphate isomerase (555 aa).

Glu365 serves as the catalytic Proton donor. Catalysis depends on residues His396 and Lys522.

It belongs to the GPI family.

The protein localises to the cytoplasm. It catalyses the reaction alpha-D-glucose 6-phosphate = beta-D-fructose 6-phosphate. Its pathway is carbohydrate biosynthesis; gluconeogenesis. It functions in the pathway carbohydrate degradation; glycolysis; D-glyceraldehyde 3-phosphate and glycerone phosphate from D-glucose: step 2/4. Functionally, catalyzes the reversible isomerization of glucose-6-phosphate to fructose-6-phosphate. In Psychrobacter arcticus (strain DSM 17307 / VKM B-2377 / 273-4), this protein is Glucose-6-phosphate isomerase.